The sequence spans 530 residues: Dual specificity calcium/calmodulin-dependent 3',5'-cyclic nucleotide phosphodiesterase 1A (530 aa).

Calmodulin-binding stretches follow at residues T24–K44 and E114–K137. The 367-residue stretch at V142–G508 folds into the PDEase domain. The Proton donor role is filled by H219. 4 residues coordinate Zn(2+): H223, H259, D260, and D366. Residue D260 participates in Mg(2+) binding. Disordered regions lie at residues T450 to T471 and K502 to S530. The segment covering K451–T471 has biased composition (polar residues). Residues P510 to S530 are compositionally biased toward basic and acidic residues.

It belongs to the cyclic nucleotide phosphodiesterase family. PDE1 subfamily. In terms of assembly, homodimer. Interacts with YWHAZ. Zn(2+) is required as a cofactor. Mg(2+) serves as cofactor.

The enzyme catalyses a nucleoside 3',5'-cyclic phosphate + H2O = a nucleoside 5'-phosphate + H(+). It catalyses the reaction 3',5'-cyclic GMP + H2O = GMP + H(+). It carries out the reaction 3',5'-cyclic AMP + H2O = AMP + H(+). Its activity is regulated as follows. Type I PDE are activated by the binding of calmodulin in the presence of Ca(2+). In terms of biological role, calcium/calmodulin-dependent cyclic nucleotide phosphodiesterase with a dual specificity for the second messengers cGMP and cAMP, which are key regulators of many important physiological processes. Has a higher efficiency with cGMP compared to cAMP. The protein is Dual specificity calcium/calmodulin-dependent 3',5'-cyclic nucleotide phosphodiesterase 1A of Bos taurus (Bovine).